We begin with the raw amino-acid sequence, 262 residues long: Ninja-family protein 2 (262 aa).

A disordered region spans residues 49-70 (RNSLACNTSKEAAGQSPKEMNA).

The protein belongs to the Ninja family.

It is found in the nucleus. The chain is Ninja-family protein 2 from Zea mays (Maize).